Here is a 156-residue protein sequence, read N- to C-terminus: MNLKQIDTIKEKIQPILSEKHLLLWDLSFFGGSPAVLTILIDGQDHQAIRMNQISEVTSLISDALDKVEPDPFPDRYNLDISSPGIDRSIKTDEHLDWALGQPIKLNLFEKIDGSKSAEGILKSFSDLEISLEVSPAEVKNFPREKISKISLNQEA.

It belongs to the RimP family.

It localises to the cytoplasm. In terms of biological role, required for maturation of 30S ribosomal subunits. This Oenococcus oeni (strain ATCC BAA-331 / PSU-1) protein is Ribosome maturation factor RimP.